A 118-amino-acid polypeptide reads, in one-letter code: Large ribosomal subunit protein bL19 (118 aa).

Belongs to the bacterial ribosomal protein bL19 family.

This protein is located at the 30S-50S ribosomal subunit interface and may play a role in the structure and function of the aminoacyl-tRNA binding site. The polypeptide is Large ribosomal subunit protein bL19 (Geotalea daltonii (strain DSM 22248 / JCM 15807 / FRC-32) (Geobacter daltonii)).